Reading from the N-terminus, the 504-residue chain is Cholesterol 7-alpha-monooxygenase (504 aa).

Cys-444 serves as a coordination point for heme.

Belongs to the cytochrome P450 family. The cofactor is heme.

It is found in the endoplasmic reticulum membrane. It localises to the microsome membrane. It carries out the reaction cholesterol + reduced [NADPH--hemoprotein reductase] + O2 = 7alpha-hydroxycholesterol + oxidized [NADPH--hemoprotein reductase] + H2O + H(+). Its pathway is lipid metabolism; bile acid biosynthesis. Its function is as follows. Catalyzes a rate-limiting step in cholesterol catabolism and bile acid biosynthesis by introducing a hydrophilic moiety at position 7 of cholesterol. Important for cholesterol homeostasis. The sequence is that of Cholesterol 7-alpha-monooxygenase (CYP7A1) from Cricetulus griseus (Chinese hamster).